Consider the following 273-residue polypeptide: 3-methyl-2-oxobutanoate hydroxymethyltransferase 3 (273 aa).

Mg(2+) is bound by residues Asp49 and Asp88. 3-methyl-2-oxobutanoate contacts are provided by residues 49 to 50, Asp88, and Lys118; that span reads DS. Mg(2+) is bound at residue Glu120. The active-site Proton acceptor is Glu187.

This sequence belongs to the PanB family. Homodecamer; pentamer of dimers. Mg(2+) is required as a cofactor.

Its subcellular location is the cytoplasm. The enzyme catalyses 3-methyl-2-oxobutanoate + (6R)-5,10-methylene-5,6,7,8-tetrahydrofolate + H2O = 2-dehydropantoate + (6S)-5,6,7,8-tetrahydrofolate. It functions in the pathway cofactor biosynthesis; (R)-pantothenate biosynthesis; (R)-pantoate from 3-methyl-2-oxobutanoate: step 1/2. Catalyzes the reversible reaction in which hydroxymethyl group from 5,10-methylenetetrahydrofolate is transferred onto alpha-ketoisovalerate to form ketopantoate. The protein is 3-methyl-2-oxobutanoate hydroxymethyltransferase 3 of Bradyrhizobium diazoefficiens (strain JCM 10833 / BCRC 13528 / IAM 13628 / NBRC 14792 / USDA 110).